The chain runs to 515 residues: 1-pyrroline-5-carboxylate dehydrogenase (515 aa).

Residues Glu-286 and Cys-320 contribute to the active site.

The protein belongs to the aldehyde dehydrogenase family. RocA subfamily.

The catalysed reaction is L-glutamate 5-semialdehyde + NAD(+) + H2O = L-glutamate + NADH + 2 H(+). It participates in amino-acid degradation; L-proline degradation into L-glutamate; L-glutamate from L-proline: step 2/2. The sequence is that of 1-pyrroline-5-carboxylate dehydrogenase (rocA) from Bacillus subtilis (strain 168).